Consider the following 515-residue polypeptide: Acetyltransferase sphE (515 aa).

Residues histidine 184 and aspartate 438 each act as proton acceptor in the active site.

It belongs to the plant acyltransferase family. As to quaternary structure, monomer.

The enzyme catalyses sphingofungin B + acetyl-CoA = sphingofungin C + CoA. The protein operates within secondary metabolite biosynthesis. Acetyltransferase; part of the gene cluster that mediates the biosynthesis of sphingofungins, bioactive molecules acting as sphingolipid inhibitors via inhibiting serine palmitoyl transferase (SPT). Within the pathway, sphE catalyzes the O-acetylation of the C-5 hydroxyl group of sphingofungin B to produce sphingofungin C. SphE can also convert sphingofungin B1 into sphingofungin C1 and sphingofungin B2 into sphingofungin C2. Sphingofungin biosynthesis starts with the PKS sphB that produces an C18 polyketide precursor 3-hydroxyoctadeca-4,10-dienoyl-ACP containing one delta-6 desaturation and one delta-12 desaturation. The aminoacyl transferase sphA uses the sphB product to produce 3-keto-presphingofungin by adding an aminomalonate molecule. SphF then reduces the C-3 ketone of 3-keto-presphingofungin which leads to presphingofungin. The cytochrome P450 monooxygenase sphH converts presphingofungin into sphingofungin B1 which is further converted to sphingofungin B by the dioxygenase sphC. SphC is also able to convert presphingofungin into sphingofungin B2. The acetyltransferase sphE acetylates sphingofungin B to produce sphingofungin C, but can also convert sphingofungin B1 into sphingofungin C1 and sphingofungin B2 into sphingofungin C2. Finally, sphingofungin C can be spontaneously converted into sphingofungin D. This is Acetyltransferase sphE from Aspergillus fumigatus (strain CBS 144.89 / FGSC A1163 / CEA10) (Neosartorya fumigata).